A 1210-amino-acid polypeptide reads, in one-letter code: Epidermal growth factor receptor (1210 aa).

A signal peptide spans 1-24 (MRPSGTARTTLLVLLTALCAAGGA). At 25–647 (LEEKKVCQGT…VWPSGPKIPS (623 aa)) the chain is on the extracellular side. Cysteines 31 and 58 form a disulfide. Residues 75–300 (DLSFLKTIQE…CVKKCPRNYV (226 aa)) form an Approximate repeat. 3 N-linked (GlcNAc...) asparagine glycosylation sites follow: Asn128, Asn175, and Asn196. 13 disulfide bridges follow: Cys157–Cys187, Cys190–Cys199, Cys194–Cys207, Cys215–Cys223, Cys219–Cys231, Cys232–Cys240, Cys236–Cys248, Cys251–Cys260, Cys264–Cys291, Cys295–Cys307, Cys311–Cys326, Cys329–Cys333, and Cys337–Cys362. Ser229 carries the post-translational modification Phosphoserine. Residues Asn352, Asn413, and Asn444 are each glycosylated (N-linked (GlcNAc...) asparagine). One copy of the Approximate repeat lies at 390 to 600 (RELEILKTVK…CVKTCPAGIM (211 aa)). 11 disulfide bridges follow: Cys470–Cys499, Cys506–Cys515, Cys510–Cys523, Cys526–Cys535, Cys539–Cys555, Cys558–Cys571, Cys562–Cys579, Cys582–Cys591, Cys595–Cys617, Cys620–Cys628, and Cys624–Cys636. Asn528 is a glycosylation site (N-linked (GlcNAc...) asparagine). N-linked (GlcNAc...) asparagine glycosylation occurs at Asn568. N-linked (GlcNAc...) asparagine glycosylation is found at Asn603 and Asn623. A helical membrane pass occupies residues 648–670 (IATGIVGGLLFIVVVALGIGLFM). The Cytoplasmic segment spans residues 671–1210 (RRRHIVRKRT…APPSSEFIGA (540 aa)). Residue Thr680 is modified to Phosphothreonine; by PKC and PKD/PRKD1. The interval 690 to 706 (LVEPLTPSGEAPNQAHL) is important for dimerization, phosphorylation and activation. Thr695 carries the phosphothreonine; by PKD/PRKD1 modification. The residue at position 697 (Ser697) is a Phosphoserine. Positions 714 to 981 (FKKIKVLGSG…KMARDPQRYL (268 aa)) constitute a Protein kinase domain. Lys718 participates in a covalent cross-link: Glycyl lysine isopeptide (Lys-Gly) (interchain with G-Cter in ubiquitin). ATP is bound at residue 720–728 (LGSGAFGTV). Lys739 is covalently cross-linked (Glycyl lysine isopeptide (Lys-Gly) (interchain with G-Cter in ubiquitin)). An ATP-binding site is contributed by Lys747. Residue Lys747 is modified to N6-(2-hydroxyisobutyryl)lysine. Residues Lys756 and Lys759 each participate in a glycyl lysine isopeptide (Lys-Gly) (interchain with G-Cter in ubiquitin) cross-link. Residue 792–793 (TQ) participates in ATP binding. Catalysis depends on Asp839, which acts as the Proton acceptor. Asp857 contacts ATP. Lys869 participates in a covalent cross-link: Glycyl lysine isopeptide (Lys-Gly) (interchain with G-Cter in ubiquitin). Phosphotyrosine is present on Tyr871. Residues Lys931, Lys962, and Lys972 each participate in a glycyl lysine isopeptide (Lys-Gly) (interchain with G-Cter in ubiquitin) cross-link. Phosphoserine occurs at positions 993 and 997. A phosphotyrosine; by autocatalysis mark is found at Tyr1000 and Tyr1018. 2 positions are modified to phosphoserine: Ser1028 and Ser1041. Residue Thr1043 is modified to Phosphothreonine. Ser1044 is modified (phosphoserine). Cys1051 is lipidated: S-palmitoyl cysteine. Tyr1069 is subject to Phosphotyrosine. Ser1070 and Ser1071 each carry phosphoserine. A phosphotyrosine; by autocatalysis mark is found at Tyr1092 and Tyr1110. The disordered stretch occupies residues 1113-1137 (QPLHPAPGRDLHYQNPHSNAVGNPE). The segment covering 1127-1137 (NPHSNAVGNPE) has biased composition (polar residues). A lipid anchor (S-palmitoyl cysteine) is attached at Cys1146. Ser1166 carries the phosphoserine modification. Tyr1172 carries the post-translational modification Phosphotyrosine; by autocatalysis. A Phosphotyrosine modification is found at Tyr1197. An Omega-N-methylarginine modification is found at Arg1199.

This sequence belongs to the protein kinase superfamily. Tyr protein kinase family. EGF receptor subfamily. Binding of the ligand triggers homo- and/or heterodimerization of the receptor triggering its autophosphorylation. Heterodimer with ERBB2. Forms a complex with CCDC88A/GIV (via SH2-like region) and GNAI3 which leads to enhanced EGFR signaling and triggering of cell migration; binding of CCDC88A requires autophosphorylation of the EGFR C-terminal region, and ligand stimulation is required for recruitment of GNAI3 to the complex. Interacts with ERRFI1; inhibits dimerization of the kinase domain and autophosphorylation. Part of a complex with ERBB2 and either PIK3C2A or PIK3C2B. Interacts with GRB2; an adapter protein coupling the receptor to downstream signaling pathways. Interacts with GAB2; involved in signaling downstream of EGFR. Interacts with STAT3; mediates EGFR downstream signaling in cell proliferation. Interacts with RIPK1; involved in NF-kappa-B activation. Interacts (autophosphorylated) with CBL, CBLB and CBLC; involved in EGFR ubiquitination and regulation; interaction with CBL is reduced in the presence of tensin TNS4. Interacts with SOCS5; regulates EGFR degradation through ELOC- and ELOB-mediated ubiquitination and proteasomal degradation. Interacts with PRMT5; methylates EGFR and enhances interaction with PTPN6. Interacts (phosphorylated) with PTPN6; inhibits EGFR-dependent activation of MAPK/ERK. Interacts with COPG1; essential for regulation of EGF-dependent nuclear transport of EGFR by retrograde trafficking from the Golgi to the ER. Interacts with TNK2; this interaction is dependent on EGF stimulation and kinase activity of EGFR. Interacts with PCNA; positively regulates PCNA. Interacts with PELP1. Interacts with MUC1. Interacts with AP2M1. Interacts with FER. Interacts (via SH2 domains) with GRB2, NCK1 and NCK2. Interacts with EPS8; mediates EPS8 phosphorylation. Interacts with ATXN2. Interacts with GAREM1. Interacts (ubiquitinated) with ANKRD13A/B/D; the interaction is direct and may regulate EGFR internalization after EGF stimulation. Interacts with GPER1; the interaction occurs in an estrogen-dependent manner. Interacts (via C-terminal cytoplasmic kinase domain) with ZPR1 (via zinc fingers). Interacts with RNF115 and RNF126. Interacts with GPRC5A (via its transmembrane domain). Interacts with FAM83B; positively regulates EGFR inducing its autophosphorylation in absence of stimulation by EGF. Interacts with LAPTM4B; positively correlates with EGFR activation. Interacts with STX19. Interacts with CD44. Interacts with PGRMC1; the interaction requires PGRMC1 homodimerization. Interacts with PIKFYVE. Interacts with NEU3. Interacts with TRAF4. Interacts with the ant venom OMEGA-myrmeciitoxin(02)-Mg1a. Interacts with CD82; this interaction facilitates ligand-induced endocytosis of the receptor and its subsequent desensitization. Monoubiquitinated and polyubiquitinated upon EGF stimulation; which does not affect tyrosine kinase activity or signaling capacity but may play a role in lysosomal targeting. Polyubiquitin linkage is mainly through 'Lys-63', but linkage through 'Lys-48', 'Lys-11' and 'Lys-29' also occurs. Deubiquitinated by OTUD7B, preventing degradation. Ubiquitinated by RNF115 and RNF126. Ubiquitinated by ZNRF1 or CBL at different lysines in response to EGF stimulation; leading to recruitment of the ESCRT machinery and subsequent degradation in the lysosomes. Deubiquitinated by UCHL1 leading to the inhibition of its degradation. Post-translationally, phosphorylated on Tyr residues in response to EGF. Phosphorylation at Ser-697 is partial and occurs only if Thr-695 is phosphorylated. Phosphorylation at Thr-680 and Thr-695 by PRKD1 inhibits EGF-induced MAPK8/JNK1 activation. Dephosphorylation by PTPRJ prevents endocytosis and stabilizes the receptor at the plasma membrane. Autophosphorylation at Tyr-1199 is stimulated by methylation at Arg-1199 and enhances interaction with PTPN6. Autophosphorylation at Tyr-1092 and/or Tyr-1110 recruits STAT3. Dephosphorylated by PTPN1 and PTPN2. In terms of processing, palmitoylated on Cys residues by ZDHHC20. Palmitoylation inhibits internalization after ligand binding, and increases the persistence of tyrosine-phosphorylated EGFR at the cell membrane. Palmitoylation increases the amplitude and duration of EGFR signaling. Methylated. Methylation at Arg-1199 by PRMT5 stimulates phosphorylation at Tyr-1197.

The protein localises to the cell membrane. It localises to the endoplasmic reticulum membrane. It is found in the golgi apparatus membrane. The protein resides in the nucleus membrane. Its subcellular location is the endosome. The protein localises to the endosome membrane. It localises to the nucleus. The enzyme catalyses L-tyrosyl-[protein] + ATP = O-phospho-L-tyrosyl-[protein] + ADP + H(+). Its activity is regulated as follows. Endocytosis and inhibition of the activated EGFR by phosphatases like PTPRJ and PTPRK constitute immediate regulatory mechanisms. Upon EGF-binding phosphorylates EPS15 that regulates EGFR endocytosis and activity. Moreover, inducible feedback inhibitors including LRIG1, SOCS4, SOCS5 and ERRFI1 constitute alternative regulatory mechanisms for the EGFR signaling. Functionally, receptor tyrosine kinase binding ligands of the EGF family and activating several signaling cascades to convert extracellular cues into appropriate cellular responses. Known ligands include EGF, TGFA/TGF-alpha, AREG, epigen/EPGN, BTC/betacellulin, epiregulin/EREG and HBEGF/heparin-binding EGF. Ligand binding triggers receptor homo- and/or heterodimerization and autophosphorylation on key cytoplasmic residues. The phosphorylated receptor recruits adapter proteins like GRB2 which in turn activates complex downstream signaling cascades. Activates at least 4 major downstream signaling cascades including the RAS-RAF-MEK-ERK, PI3 kinase-AKT, PLCgamma-PKC and STATs modules. May also activate the NF-kappa-B signaling cascade. Also directly phosphorylates other proteins like RGS16, activating its GTPase activity and probably coupling the EGF receptor signaling to the G protein-coupled receptor signaling. Also phosphorylates MUC1 and increases its interaction with SRC and CTNNB1/beta-catenin. Positively regulates cell migration via interaction with CCDC88A/GIV which retains EGFR at the cell membrane following ligand stimulation, promoting EGFR signaling which triggers cell migration. Plays a role in enhancing learning and memory performance. Plays a role in mammalian pain signaling (long-lasting hypersensitivity). This chain is Epidermal growth factor receptor, found in Mus musculus (Mouse).